The sequence spans 629 residues: Probable indole-3-acetic acid-amido synthetase GH3.4 (629 aa).

The protein belongs to the IAA-amido conjugating enzyme family. Expressed in flowers.

Its function is as follows. May catalyze the synthesis of indole-3-acetic acid (IAA)-amino acid conjugates, providing a mechanism for the plant to cope with the presence of excess auxin. This chain is Probable indole-3-acetic acid-amido synthetase GH3.4 (GH3.4), found in Oryza sativa subsp. japonica (Rice).